The following is a 396-amino-acid chain: MAKAKFERNKPHVNVGTIGHVDHGKTTLTAAIATICAKTYGGEAKDYSQIDSAPEEKARGITINTSHVEYDSPIRHYAHVDCPGHADYVKNMITGAAQMDGAILVCAATDGPMPQTREHILLSRQVGVPYIVVFLNKCDLVDDEELLELVEMEVRELLSTYDFPGDDTPVIRGSALKALEGDAGQYGESSVLALVEALDTYIPEPERAIDKAFLMPIEDVFSISGRGTVVTGRVEAGIVKVGESVEIVGIRDTQTTTVTGVEMFRKLLDEGRAGENCGVLLRGTKREDVQRGQVLAKPGTIKPHTKFDAEVYVLSKEEGGRHTPFLNGYRPQFYFRTTDVTGAIQLKEGVEMVMPGDNVEMSVELIHPIAMDPGLRFAIREGGRTVGAGVVAKVTA.

The region spanning 10 to 206 (KPHVNVGTIG…ALDTYIPEPE (197 aa)) is the tr-type G domain. The G1 stretch occupies residues 19–26 (GHVDHGKT). Residue 19-26 (GHVDHGKT) coordinates GTP. Thr26 provides a ligand contact to Mg(2+). A G2 region spans residues 60–64 (GITIN). Residues 81-84 (DCPG) are G3. Residues 81–85 (DCPGH) and 136–139 (NKCD) each bind GTP. The tract at residues 136–139 (NKCD) is G4. Positions 174-176 (SAL) are G5.

Belongs to the TRAFAC class translation factor GTPase superfamily. Classic translation factor GTPase family. EF-Tu/EF-1A subfamily. In terms of assembly, monomer.

It localises to the cytoplasm. The catalysed reaction is GTP + H2O = GDP + phosphate + H(+). In terms of biological role, GTP hydrolase that promotes the GTP-dependent binding of aminoacyl-tRNA to the A-site of ribosomes during protein biosynthesis. The sequence is that of Elongation factor Tu from Acinetobacter baylyi (strain ATCC 33305 / BD413 / ADP1).